Consider the following 272-residue polypeptide: Imidazole glycerol phosphate synthase subunit HisF (272 aa).

Residues D11 and D130 contribute to the active site.

The protein belongs to the HisA/HisF family. As to quaternary structure, heterodimer of HisH and HisF.

It is found in the cytoplasm. The catalysed reaction is 5-[(5-phospho-1-deoxy-D-ribulos-1-ylimino)methylamino]-1-(5-phospho-beta-D-ribosyl)imidazole-4-carboxamide + L-glutamine = D-erythro-1-(imidazol-4-yl)glycerol 3-phosphate + 5-amino-1-(5-phospho-beta-D-ribosyl)imidazole-4-carboxamide + L-glutamate + H(+). The protein operates within amino-acid biosynthesis; L-histidine biosynthesis; L-histidine from 5-phospho-alpha-D-ribose 1-diphosphate: step 5/9. Its function is as follows. IGPS catalyzes the conversion of PRFAR and glutamine to IGP, AICAR and glutamate. The HisF subunit catalyzes the cyclization activity that produces IGP and AICAR from PRFAR using the ammonia provided by the HisH subunit. This is Imidazole glycerol phosphate synthase subunit HisF from Methanococcus maripaludis (strain C5 / ATCC BAA-1333).